The chain runs to 401 residues: Cysteine desulfurase CsdA (401 aa).

N6-(pyridoxal phosphate)lysine is present on Lys222. Cys358 functions as the Cysteine persulfide intermediate in the catalytic mechanism.

This sequence belongs to the class-V pyridoxal-phosphate-dependent aminotransferase family. Csd subfamily. As to quaternary structure, homodimer. Forms a heterodimer with CsdE. Pyridoxal 5'-phosphate serves as cofactor.

The catalysed reaction is (sulfur carrier)-H + L-cysteine = (sulfur carrier)-SH + L-alanine. It catalyses the reaction L-selenocysteine + AH2 = hydrogenselenide + L-alanine + A + H(+). It carries out the reaction 3-sulfino-L-alanine + H2O = sulfite + L-alanine + H(+). Its activity is regulated as follows. Cysteine desulfurase activity is increased 2-fold in the presence of CsdE. Functionally, catalyzes the removal of elemental sulfur and selenium atoms from L-cysteine, L-cystine, L-selenocysteine, and L-selenocystine to produce L-alanine, and transiently retains the released sulfur atom on a cysteine residue, in the form of a persulfide. Can also desulfinate L-cysteine sulfinate (3-sulfino-L-alanine), which is the best substrate of the enzyme. Functions as a selenium delivery protein in the pathway for the biosynthesis of selenophosphate. Seems to participate in Fe/S biogenesis by recruiting the SufBCD-SufE proteins. Transfers sulfur to CsdE that increases the cysteine desulfurase activity of CsdA. Can also transfer sulfur directly to TcdA/CsdL in vitro. Appears to support the function of TcdA in the generation of cyclic threonylcarbamoyladenosine at position 37 (ct(6)A37) in tRNAs that read codons beginning with adenine. The chain is Cysteine desulfurase CsdA (csdA) from Escherichia coli (strain K12).